The primary structure comprises 161 residues: Cyclic pyranopterin monophosphate synthase (161 aa).

Substrate-binding positions include 75–77 and 113–114; these read LCH and ME. Asp128 is a catalytic residue.

The protein belongs to the MoaC family. Homohexamer; trimer of dimers.

The catalysed reaction is (8S)-3',8-cyclo-7,8-dihydroguanosine 5'-triphosphate = cyclic pyranopterin phosphate + diphosphate. Its pathway is cofactor biosynthesis; molybdopterin biosynthesis. Catalyzes the conversion of (8S)-3',8-cyclo-7,8-dihydroguanosine 5'-triphosphate to cyclic pyranopterin monophosphate (cPMP). The sequence is that of Cyclic pyranopterin monophosphate synthase from Salmonella typhi.